The sequence spans 456 residues: GTPase Der (456 aa).

2 EngA-type G domains span residues 4-169 (PVVA…PSKD) and 178-353 (VQLA…DQSR). GTP contacts are provided by residues 10–17 (GRPNVGKS), 57–61 (DTGGL), 120–123 (NKCE), 184–191 (GRPNVGKS), 231–235 (DTAGI), and 296–299 (NKWD). The KH-like domain maps to 354–439 (RRVTTSVVNE…PIKLFWRGKQ (86 aa)).

The protein belongs to the TRAFAC class TrmE-Era-EngA-EngB-Septin-like GTPase superfamily. EngA (Der) GTPase family. As to quaternary structure, associates with the 50S ribosomal subunit.

Functionally, GTPase that plays an essential role in the late steps of ribosome biogenesis. This is GTPase Der from Prochlorococcus marinus (strain NATL1A).